Reading from the N-terminus, the 377-residue chain is DNA-directed RNA polymerase subunit alpha (377 aa).

An alpha N-terminal domain (alpha-NTD) region spans residues 1–259 (MSDSSHNLLY…KHFSVFEKMD (259 aa)). Positions 279 to 377 (ILHKLVLGIN…KIRSSKNTKG (99 aa)) are alpha C-terminal domain (alpha-CTD).

This sequence belongs to the RNA polymerase alpha chain family. As to quaternary structure, homodimer. The RNAP catalytic core consists of 2 alpha, 1 beta, 1 beta' and 1 omega subunit. When a sigma factor is associated with the core the holoenzyme is formed, which can initiate transcription.

The catalysed reaction is RNA(n) + a ribonucleoside 5'-triphosphate = RNA(n+1) + diphosphate. DNA-dependent RNA polymerase catalyzes the transcription of DNA into RNA using the four ribonucleoside triphosphates as substrates. The sequence is that of DNA-directed RNA polymerase subunit alpha from Chlamydia trachomatis serovar L2 (strain ATCC VR-902B / DSM 19102 / 434/Bu).